Consider the following 333-residue polypeptide: Dihydroorotate dehydrogenase (quinone) (333 aa).

Residues 56 to 60 (AGLDK) and threonine 80 each bind FMN. A substrate-binding site is contributed by lysine 60. Residue 105–109 (NRMGF) coordinates substrate. Residues asparagine 133 and asparagine 166 each coordinate FMN. Asparagine 166 contacts substrate. The Nucleophile role is filled by serine 169. Asparagine 171 contributes to the substrate binding site. Lysine 211 and threonine 239 together coordinate FMN. Residue 240 to 241 (NT) coordinates substrate. Residues glycine 262, glycine 291, and 312-313 (YS) contribute to the FMN site.

Belongs to the dihydroorotate dehydrogenase family. Type 2 subfamily. In terms of assembly, monomer. It depends on FMN as a cofactor.

The protein localises to the cell membrane. It catalyses the reaction (S)-dihydroorotate + a quinone = orotate + a quinol. It functions in the pathway pyrimidine metabolism; UMP biosynthesis via de novo pathway; orotate from (S)-dihydroorotate (quinone route): step 1/1. Its function is as follows. Catalyzes the conversion of dihydroorotate to orotate with quinone as electron acceptor. This chain is Dihydroorotate dehydrogenase (quinone), found in Legionella pneumophila (strain Lens).